A 484-amino-acid chain; its full sequence is 60S ribosome subunit biogenesis protein NOP8 (484 aa).

In terms of domain architecture, RRM spans 7 to 83 (KRIFVGNIFH…NILKVDEAKP (77 aa)). Residues serine 234, serine 239, and serine 268 each carry the phosphoserine modification. The segment at 260–330 (DKPMTLNDSD…EGDGQEDNEF (71 aa)) is disordered. Acidic residues predominate over residues 320-329 (DEGDGQEDNE). Residue serine 370 is modified to Phosphoserine.

In terms of assembly, interacts with NIP7 and RRP43. Together with DBP6, URB1, URB2 and RSA3, forms an RNA-independent complex, which is required during early maturation of nascent 60S ribosomal subunits.

It localises to the nucleus. The protein localises to the nucleolus. In terms of biological role, required for 60S ribosomal subunit synthesis. May be involved in assembly reactions occurring within late pre-ribosomal particles. The polypeptide is 60S ribosome subunit biogenesis protein NOP8 (NOP8) (Saccharomyces cerevisiae (strain ATCC 204508 / S288c) (Baker's yeast)).